We begin with the raw amino-acid sequence, 185 residues long: Protein GrpE (185 aa).

It belongs to the GrpE family. In terms of assembly, homodimer.

It is found in the cytoplasm. Its function is as follows. Participates actively in the response to hyperosmotic and heat shock by preventing the aggregation of stress-denatured proteins, in association with DnaK and GrpE. It is the nucleotide exchange factor for DnaK and may function as a thermosensor. Unfolded proteins bind initially to DnaJ; upon interaction with the DnaJ-bound protein, DnaK hydrolyzes its bound ATP, resulting in the formation of a stable complex. GrpE releases ADP from DnaK; ATP binding to DnaK triggers the release of the substrate protein, thus completing the reaction cycle. Several rounds of ATP-dependent interactions between DnaJ, DnaK and GrpE are required for fully efficient folding. This chain is Protein GrpE, found in Methanobrevibacter smithii (strain ATCC 35061 / DSM 861 / OCM 144 / PS).